Here is a 228-residue protein sequence, read N- to C-terminus: Phosphatidylglycerophosphate phosphatase PTPMT2 (228 aa).

A compositionally biased stretch (acidic residues) spans 1 to 10 (MTDETEEDDT). The interval 1 to 30 (MTDETEEDDTTQQRSSRNDGVSKNKGKGFK) is disordered. 2 residues coordinate substrate: tyrosine 48 and aspartate 126. Residues 66-213 (WWDQIDEYLL…VEEFSRLQSP (148 aa)) form the Tyrosine-protein phosphatase domain. Residue cysteine 157 is the Phosphocysteine intermediate of the active site. The Glucan phosphatase signature motif CXAGXGR motif lies at 157-163 (CKAGRGR). 158–163 (KAGRGR) lines the substrate pocket.

Belongs to the protein-tyrosine phosphatase family. Non-receptor class dual specificity subfamily. As to expression, expressed in roots, leaves, stems and flowers. In terms of tissue distribution, expressed at low levels in stems and flowers.

The catalysed reaction is O-phospho-L-seryl-[protein] + H2O = L-seryl-[protein] + phosphate. The enzyme catalyses O-phospho-L-threonyl-[protein] + H2O = L-threonyl-[protein] + phosphate. It catalyses the reaction O-phospho-L-tyrosyl-[protein] + H2O = L-tyrosyl-[protein] + phosphate. It carries out the reaction a 1,2-diacyl-sn-glycero-3-phospho-(1'-sn-glycero-3'-phosphate) + H2O = a 1,2-diacyl-sn-glycero-3-phospho-(1'-sn-glycerol) + phosphate. It functions in the pathway phospholipid metabolism; phosphatidylglycerol biosynthesis; phosphatidylglycerol from CDP-diacylglycerol: step 2/2. Functionally, exhibits phosphatidylglycerophosphate phosphatase activity. Involved in root growth and columella cells organization. May possess protein phosphatase activity. This Arabidopsis thaliana (Mouse-ear cress) protein is Phosphatidylglycerophosphate phosphatase PTPMT2.